Reading from the N-terminus, the 496-residue chain is Glutamyl-tRNA(Gln) amidotransferase subunit A (496 aa).

Catalysis depends on charge relay system residues lysine 79 and serine 159. Catalysis depends on serine 183, which acts as the Acyl-ester intermediate.

The protein belongs to the amidase family. GatA subfamily. As to quaternary structure, heterotrimer of A, B and C subunits.

It catalyses the reaction L-glutamyl-tRNA(Gln) + L-glutamine + ATP + H2O = L-glutaminyl-tRNA(Gln) + L-glutamate + ADP + phosphate + H(+). Functionally, allows the formation of correctly charged Gln-tRNA(Gln) through the transamidation of misacylated Glu-tRNA(Gln) in organisms which lack glutaminyl-tRNA synthetase. The reaction takes place in the presence of glutamine and ATP through an activated gamma-phospho-Glu-tRNA(Gln). The polypeptide is Glutamyl-tRNA(Gln) amidotransferase subunit A (Ruegeria pomeroyi (strain ATCC 700808 / DSM 15171 / DSS-3) (Silicibacter pomeroyi)).